Reading from the N-terminus, the 247-residue chain is tRNA pseudouridine synthase A (247 aa).

The active-site Nucleophile is the Asp-53. Tyr-111 contributes to the substrate binding site.

This sequence belongs to the tRNA pseudouridine synthase TruA family. As to quaternary structure, homodimer.

It catalyses the reaction uridine(38/39/40) in tRNA = pseudouridine(38/39/40) in tRNA. Formation of pseudouridine at positions 38, 39 and 40 in the anticodon stem and loop of transfer RNAs. The chain is tRNA pseudouridine synthase A from Bacillus licheniformis (strain ATCC 14580 / DSM 13 / JCM 2505 / CCUG 7422 / NBRC 12200 / NCIMB 9375 / NCTC 10341 / NRRL NRS-1264 / Gibson 46).